The primary structure comprises 348 residues: Dihydroorotase (348 aa).

Zn(2+)-binding residues include His14 and His16. Substrate contacts are provided by residues 16–18 (HLR) and Asn42. Zn(2+) contacts are provided by Lys100, His137, and His175. An N6-carboxylysine modification is found at Lys100. His137 serves as a coordination point for substrate. Residue Leu220 coordinates substrate. A Zn(2+)-binding site is contributed by Asp248. Asp248 is a catalytic residue. Residues His252 and Ala264 each contribute to the substrate site.

This sequence belongs to the metallo-dependent hydrolases superfamily. DHOase family. Class II DHOase subfamily. In terms of assembly, homodimer. It depends on Zn(2+) as a cofactor.

It catalyses the reaction (S)-dihydroorotate + H2O = N-carbamoyl-L-aspartate + H(+). The protein operates within pyrimidine metabolism; UMP biosynthesis via de novo pathway; (S)-dihydroorotate from bicarbonate: step 3/3. In terms of biological role, catalyzes the reversible cyclization of carbamoyl aspartate to dihydroorotate. The chain is Dihydroorotase from Pseudomonas putida (strain GB-1).